We begin with the raw amino-acid sequence, 191 residues long: Calcium and integrin-binding protein 1 (191 aa).

Glycine 2 is lipidated: N-myristoyl glycine. 2 EF-hand domains span residues 103–138 and 148–183; these read TPDIKSHYAFRIFDFDDDGTLDREDLSQLVNCLTGE and EMKQLIDNILEESDIDRDGTINLSEFQHVISRSPDF. Residues aspartate 116, aspartate 118, aspartate 120, threonine 122, aspartate 127, aspartate 161, aspartate 163, aspartate 165, threonine 167, and glutamate 172 each contribute to the Ca(2+) site.

In terms of assembly, monomer. Interacts with the heterodimeric integrin alpha-IIb/beta3 (ITGA2B-ITGB3). Interacts with ITGA2B (via cytoplasmic domain); the interaction is direct and calcium-dependent. Interacts with the protein kinases PLK2/SNK and PRKDC (via the region immediately upstream of the kinase domain). Interacts with PLK3; the interaction inhibits PLK3 kinase activity. Interacts with PSEN2. Interacts (via C-terminus) with F8. Interacts with NBR1 (via C-terminus). Interacts with FEZ1 (via C-terminus). Interacts with UBR5 (via C-terminus); the interaction is sensitive to DNA damage, and may target CIB1 for ubiquitin-mediated degradation. Interacts with IFI6; the interaction is direct. Interacts with BCL2. Interacts with TAS1R2 (via C-terminus); the interaction is independent of the myristoylation state of CIB1. Interacts with ITPR3; the interaction occurs in a calcium dependent manner. Interacts with PTK2/FAK1. Interacts with MAP3K5; the interaction inhibits MAP3K5 activation by phosphorylation, and its subsequent interaction with TRAF2. Interacts (via C-terminal region) with STMN2 (via the N-terminal region); the interaction is direct, occurs in a calcium-dependent manner and attenuates the STMN2-induced neurite outgrowth inhibition. Interacts with SPHK1, the interaction occurs in a calcium-dependent manner. Interacts with ITGA2B (via C-terminal cytoplasmic tail); the interaction occurs upon platelet aggregation and is stabilized/increased in a calcium and magnesium-dependent manner. Interacts with PAK1 (via N-terminal region); the interaction is direct and occurs in a calcium-dependent manner. Interacts with RAC3 (via C-terminal region); the interaction induces their association with the cytoskeleton upon alpha-IIb/beta3 integrin-mediated adhesion. Interacts with ITGA5 and ITGAV. Interacts with MYO1C. Interacts with ITGA2B (via C-terminal cytoplasmic tail region). Interacts (via C-terminal region) with PPP3R1 isoform 1 and isoform 2; the interactions increase upon cardiomyocytes hypertrophy. Interacts with CACNA1C; the interaction increases upon cardiomyocytes hypertrophy. Interacts and forms a complex with TMC6 and TMC8; the interaction stabilizes each component of the complex. Expressed strongly in Sertoli cells, weakly in pachytene spermatocytes, round spermatids and condensing spermatids (at protein level). Expressed in testis. Expressed in cardiac myocytes and endothelial cells. Expressed in heart, liver, spleen, lung, kidney, brain and inner ear. In the inner ear, expressed in the vestibule, basilar membrane and spiral ganglion cells.

It localises to the membrane. The protein resides in the cell membrane. The protein localises to the sarcolemma. It is found in the apical cell membrane. Its subcellular location is the cell projection. It localises to the ruffle membrane. The protein resides in the filopodium tip. The protein localises to the growth cone. It is found in the lamellipodium. Its subcellular location is the cytoplasm. It localises to the cytoskeleton. The protein resides in the microtubule organizing center. The protein localises to the centrosome. It is found in the perinuclear region. Its subcellular location is the nucleus. It localises to the neuron projection. The protein resides in the perikaryon. Functionally, calcium-binding protein that plays a role in the regulation of numerous cellular processes, such as cell differentiation, cell division, cell proliferation, cell migration, thrombosis, angiogenesis, cardiac hypertrophy and apoptosis. Involved in bone marrow megakaryocyte differentiation by negatively regulating thrombopoietin-mediated signaling pathway. Participates in the endomitotic cell cycle of megakaryocyte, a form of mitosis in which both karyokinesis and cytokinesis are interrupted. Plays a role in integrin signaling by negatively regulating alpha-IIb/beta3 activation in thrombin-stimulated megakaryocytes preventing platelet aggregation. Up-regulates PTK2/FAK1 activity, and is also needed for the recruitment of PTK2/FAK1 to focal adhesions; it thus appears to play an important role in focal adhesion formation. Positively regulates cell migration on fibronectin in a CDC42-dependent manner, the effect being negatively regulated by PAK1. Functions as a negative regulator of stress activated MAP kinase (MAPK) signaling pathways. Down-regulates inositol 1,4,5-trisphosphate receptor-dependent calcium signaling. Involved in sphingosine kinase SPHK1 translocation to the plasma membrane in a N-myristoylation-dependent manner preventing TNF-alpha-induced apoptosis. Regulates serine/threonine-protein kinase PLK3 activity for proper completion of cell division progression. Plays a role in microtubule (MT) dynamics during neuronal development; disrupts the MT depolymerization activity of STMN2 attenuating NGF-induced neurite outgrowth and the MT reorganization at the edge of lamellipodia. Promotes cardiomyocyte hypertrophy via activation of the calcineurin/NFAT signaling pathway. Stimulates calcineurin PPP3R1 activity by mediating its anchoring to the sarcolemma. In ischemia-induced (pathological or adaptive) angiogenesis, stimulates endothelial cell proliferation, migration and microvessel formation by activating the PAK1 and ERK1/ERK2 signaling pathway. Also promotes cancer cell survival and proliferation. May regulate cell cycle and differentiation of spermatogenic germ cells, and/or differentiation of supporting Sertoli cells. Forms a complex with TMC6/EVER1 and TMC8/EVER2 in lymphocytes and keratynocytes where CIB1 stabilizes TMC6 and TMC8 levels and reciprocally. The protein is Calcium and integrin-binding protein 1 (Cib1) of Mus musculus (Mouse).